Consider the following 859-residue polypeptide: Toll-like receptor 5 (859 aa).

An N-terminal signal peptide occupies residues 1–26 (MACQLDLLIGVIFMASPVLVISPCSS). The Extracellular segment spans residues 27–641 (DGRIAFFRGC…EEEAMRSLKF (615 aa)). Residues Asn37, Asn46, and Asn84 are each glycosylated (N-linked (GlcNAc...) asparagine). 9 LRR repeats span residues 45–69 (LNTTTERLLLSFNYISMVVATSFPL), 72–94 (RLQLLELGTQYANLTIGPGAFRN), 96–118 (PNLRILDLGQSQIEVLNRDAFQG), 121–144 (HLLELRLFSCGLSSAVLSDGYFRN), 147–167 (SLARLDLSGNQIHSLRLHSSF), 172–193 (SLSDVNFAFNQIFTICEDELEP), 198–212 (TLSFFGLKLTKLFSR), 215–230 (VGWETCRNPFRGVRLE), and 235–236 (SE). N-linked (GlcNAc...) asparagine glycosylation occurs at Asn246. LRR repeat units follow at residues 261–285 (LKHHIMGPGFGFQNIRDPDQSTFAS), 290–302 (SVLQLDLSHGFIF), 314–335 (DLKMLNLAFNKINKIGENAFYG), 338–356 (SLQVLNLSYNLLGELYNSN), 386–402 (TLQTLDLRDNALKAIGF), and 413–432 (GNKLVHLPHIHFTANFLELS). An N-linked (GlcNAc...) asparagine glycan is attached at Asn343. Asn438 carries an N-linked (GlcNAc...) asparagine glycan. LRR repeat units follow at residues 450-471 (QLQFLILNQNRLSSCKAAHTPS), 475-496 (SLEQLFLTENMLQLAWETGLCW), 504-525 (RLQILYLSNNYLNFLPPGIFND), 528-547 (ALRMLSLSANKLTVLSPGSL), and 550-568 (NLEILDISRNQLLCPDPAL). One can recognise an LRRCT domain in the interval 580-632 (NEFVCNCELSTFISWLNQTNVTLFGSPADVYCMYPNSLLGGSLYNISTEDCDE). Intrachain disulfides connect Cys584–Cys611 and Cys586–Cys630. 3 N-linked (GlcNAc...) asparagine glycosylation sites follow: Asn596, Asn599, and Asn624. A helical membrane pass occupies residues 642 to 662 (SLFILCTVTLTLFLVITLVVI). Over 663–859 (KFRGICFLCY…IQLRTIATIS (197 aa)) the chain is Cytoplasmic. Residues 692 to 837 (YRYDAYFCFS…WFLDKLSGCI (146 aa)) form the TIR domain. At Tyr799 the chain carries Phosphotyrosine.

This sequence belongs to the Toll-like receptor family. As to quaternary structure, homodimer. Interacts with MYD88 (via TIR domain). Interacts with TICAM1 (via TIR domain). Interacts with UNC93B1; this interaction is essential for proper TLR5 localization to the plasma membrane. Phosphorylated at Tyr-799 upon flagellin binding; required for signaling. Highly expressed in liver. Detected in lung and at very low levels in most other tissues.

It is found in the membrane. Functionally, pattern recognition receptor (PRR) located on the cell surface that participates in the activation of innate immunity and inflammatory response. Recognizes small molecular motifs named pathogen-associated molecular pattern (PAMPs) expressed by pathogens and microbe-associated molecular patterns (MAMPs) usually expressed by resident microbiota. Upon ligand binding such as bacterial flagellins, recruits intracellular adapter proteins MYD88 and TRIF leading to NF-kappa-B activation, cytokine secretion and induction of the inflammatory response. Plays thereby an important role in the relationship between the intestinal epithelium and enteric microbes and contributes to the gut microbiota composition throughout life. The sequence is that of Toll-like receptor 5 (Tlr5) from Mus musculus (Mouse).